We begin with the raw amino-acid sequence, 429 residues long: Serine--tRNA ligase (429 aa).

Position 235 to 237 (235 to 237 (TAE)) interacts with L-serine. 266–268 (RSE) contacts ATP. Residue Glu289 coordinates L-serine. 353–356 (EISS) is an ATP binding site. Ser389 provides a ligand contact to L-serine.

It belongs to the class-II aminoacyl-tRNA synthetase family. Type-1 seryl-tRNA synthetase subfamily. As to quaternary structure, homodimer. The tRNA molecule binds across the dimer.

It localises to the cytoplasm. It carries out the reaction tRNA(Ser) + L-serine + ATP = L-seryl-tRNA(Ser) + AMP + diphosphate + H(+). The catalysed reaction is tRNA(Sec) + L-serine + ATP = L-seryl-tRNA(Sec) + AMP + diphosphate + H(+). Its pathway is aminoacyl-tRNA biosynthesis; selenocysteinyl-tRNA(Sec) biosynthesis; L-seryl-tRNA(Sec) from L-serine and tRNA(Sec): step 1/1. Catalyzes the attachment of serine to tRNA(Ser). Is also able to aminoacylate tRNA(Sec) with serine, to form the misacylated tRNA L-seryl-tRNA(Sec), which will be further converted into selenocysteinyl-tRNA(Sec). The sequence is that of Serine--tRNA ligase from Histophilus somni (strain 129Pt) (Haemophilus somnus).